A 94-amino-acid chain; its full sequence is MTKRTKKVGVTGKYGVRYGASLRRDVRKIEVQQHSRYQCPFCGRLTVKRTAAGIWKCSGKGCSKTLAGGAWTVTTAAATSARSTIRRLREMVEV.

A C4-type zinc finger spans residues 39–62 (CPFCGRLTVKRTAAGIWKCSGKGC).

Belongs to the eukaryotic ribosomal protein eL43 family. Component of the large ribosomal subunit (LSU). Mature yeast ribosomes consist of a small (40S) and a large (60S) subunit. The 40S small subunit contains 1 molecule of ribosomal RNA (18S rRNA) and at least 33 different proteins. The large 60S subunit contains 3 rRNA molecules (25S, 5.8S and 5S rRNA) and at least 46 different proteins.

The protein resides in the cytoplasm. Component of the ribosome, a large ribonucleoprotein complex responsible for the synthesis of proteins in the cell. The small ribosomal subunit (SSU) binds messenger RNAs (mRNAs) and translates the encoded message by selecting cognate aminoacyl-transfer RNA (tRNA) molecules. The large subunit (LSU) contains the ribosomal catalytic site termed the peptidyl transferase center (PTC), which catalyzes the formation of peptide bonds, thereby polymerizing the amino acids delivered by tRNAs into a polypeptide chain. The nascent polypeptides leave the ribosome through a tunnel in the LSU and interact with protein factors that function in enzymatic processing, targeting, and the membrane insertion of nascent chains at the exit of the ribosomal tunnel. The protein is Large ribosomal subunit protein eL43B (rpl4302) of Schizosaccharomyces pombe (strain 972 / ATCC 24843) (Fission yeast).